The following is a 158-amino-acid chain: GTP-dependent dephospho-CoA kinase (158 aa).

GTP-binding residues include Asp35, Val36, Asp54, Lys56, Glu109, and Asp132.

Belongs to the GTP-dependent DPCK family.

It carries out the reaction 3'-dephospho-CoA + GTP = GDP + CoA + H(+). The protein operates within cofactor biosynthesis; coenzyme A biosynthesis. Catalyzes the GTP-dependent phosphorylation of the 3'-hydroxyl group of dephosphocoenzyme A to form coenzyme A (CoA). In Methanococcus maripaludis (strain C7 / ATCC BAA-1331), this protein is GTP-dependent dephospho-CoA kinase.